Here is a 245-residue protein sequence, read N- to C-terminus: Probable ABC transporter permease protein HI_0355 (245 aa).

6 helical membrane-spanning segments follow: residues 9–29 (LLIV…GSFP), 61–81 (ICLG…LLSF), 92–112 (ILVI…VLWF), 115–135 (GMAS…TAAC), 170–190 (LPAF…GAVV), and 217–237 (FAAL…IDWL). The ABC transmembrane type-1 domain maps to 50 to 234 (LWQHTQVTLL…SISLCLYFSI (185 aa)).

Belongs to the binding-protein-dependent transport system permease family. CysTW subfamily.

The protein resides in the cell inner membrane. Its function is as follows. Probably part of a binding-protein-dependent transport system. Probably responsible for the translocation of the substrate across the membrane. The chain is Probable ABC transporter permease protein HI_0355 from Haemophilus influenzae (strain ATCC 51907 / DSM 11121 / KW20 / Rd).